Here is a 278-residue protein sequence, read N- to C-terminus: S-formylglutathione hydrolase YeiG (278 aa).

Residues serine 145, aspartate 223, and histidine 256 each act as charge relay system in the active site.

Belongs to the esterase D family.

It carries out the reaction S-formylglutathione + H2O = formate + glutathione + H(+). Functionally, serine hydrolase involved in the detoxification of formaldehyde. Hydrolyzes S-formylglutathione to glutathione and formate. The protein is S-formylglutathione hydrolase YeiG (yeiG) of Escherichia coli O157:H7.